The sequence spans 680 residues: DNA ligase (680 aa).

NAD(+) is bound at residue 32–36 (DTVYD). Residues 47–66 (QNDPGLQRPDSPTQRVGGAP) form a disordered region. NAD(+) contacts are provided by residues 81–82 (SL) and glutamate 115. Residue lysine 117 is the N6-AMP-lysine intermediate of the active site. The NAD(+) site is built by arginine 138, glutamate 175, lysine 291, and lysine 315. Zn(2+)-binding residues include cysteine 409, cysteine 412, cysteine 427, and cysteine 432. One can recognise a BRCT domain in the interval 602–680 (DADGVLQGKT…EADLTALLQP (79 aa)).

Belongs to the NAD-dependent DNA ligase family. LigA subfamily. The cofactor is Mg(2+). Mn(2+) serves as cofactor.

It catalyses the reaction NAD(+) + (deoxyribonucleotide)n-3'-hydroxyl + 5'-phospho-(deoxyribonucleotide)m = (deoxyribonucleotide)n+m + AMP + beta-nicotinamide D-nucleotide.. Its function is as follows. DNA ligase that catalyzes the formation of phosphodiester linkages between 5'-phosphoryl and 3'-hydroxyl groups in double-stranded DNA using NAD as a coenzyme and as the energy source for the reaction. It is essential for DNA replication and repair of damaged DNA. The sequence is that of DNA ligase from Synechococcus sp. (strain CC9605).